The following is a 119-amino-acid chain: Holo-[acyl-carrier-protein] synthase (119 aa).

Mg(2+) contacts are provided by Asp8 and Glu58.

This sequence belongs to the P-Pant transferase superfamily. AcpS family. Mg(2+) is required as a cofactor.

Its subcellular location is the cytoplasm. It catalyses the reaction apo-[ACP] + CoA = holo-[ACP] + adenosine 3',5'-bisphosphate + H(+). Its function is as follows. Transfers the 4'-phosphopantetheine moiety from coenzyme A to a Ser of acyl-carrier-protein. The protein is Holo-[acyl-carrier-protein] synthase of Bacillus cereus (strain ATCC 14579 / DSM 31 / CCUG 7414 / JCM 2152 / NBRC 15305 / NCIMB 9373 / NCTC 2599 / NRRL B-3711).